The primary structure comprises 468 residues: Gasdermin-C (468 aa).

The tract at residues 1-230 (MSYTFDWLSK…CVILTSANTK (230 aa)) is triggers pyroptosis.

The protein belongs to the gasdermin family. In terms of assembly, homooligomer; homooligomeric ring-shaped pore complex containing 27-28 subunits when inserted in the membrane. In terms of processing, cleavage by CASP8 relieves autoinhibition by releasing the N-terminal moiety (Gasdermin-C, N-terminal) that initiates pyroptosis. Palmitoylated.

It localises to the cytoplasm. The protein resides in the cytosol. The protein localises to the cell membrane. Its activity is regulated as follows. The full-length protein before cleavage is inactive: intramolecular interactions between N- and C-terminal domains mediate autoinhibition in the absence of activation signal. The intrinsic pyroptosis-inducing activity is carried by the released N-terminal moiety (Gasdermin-C, N-terminal) following cleavage by caspase CASP8. This form constitutes the precursor of the pore-forming protein: upon cleavage, the released N-terminal moiety (Gasdermin-C, N-terminal) binds to membranes and forms pores, triggering pyroptosis. Its function is as follows. Pore-forming protein that causes membrane permeabilization and pyroptosis. Produced by the cleavage of gasdermin-C by caspase CASP8 in response to death signals. After cleavage, moves to the plasma membrane where it strongly binds to membrane inner leaflet lipids. Homooligomerizes within the membrane and forms pores of 10-15 nanometers (nm) of inner diameter, triggering pyroptosis. This chain is Gasdermin-C, found in Mus musculus (Mouse).